The following is a 975-amino-acid chain: 26S proteasome non-ATPase regulatory subunit 1 (975 aa).

The interval 272–303 is disordered; that stretch reads EKKSTTTTTTTPASDSMEIDIDSGNEKSGGSS. PC repeat units lie at residues 393–426, 431–464, 465–499, 500–534, 536–569, 570–605, 606–638, 640–674, 675–715, and 718–748; these read SAISSLGVINKGHIKESKSLLKTYLPGASVNQTP, GSLYALGLIHASHGEEIIDYLVEKLHINNAILHH, GASLGLGLAAMATGRDDLYEDLKSVLYNDDAVSGE, AAGLAMGLVMLGSGAKKAIEEMLAYAHETQHEKTI, SLSMGLAFLMYGKEESADTLIEQMIGDKDPLIRY, GGMYAIAFAYCGTGHNDALRKLLHVAVSDGTDSVRR, AAVTCIGFVLSRQPEKCPKAIALLAESYNPHVR, GAAFALGIACAGTGQRDALEILKSLTTDSVGYVKQ, AAWI…DSMS, and GAVLAFGVIDAGGRNSTIQLHSPSGHKNMNA. Disordered stretches follow at residues 832–882 and 922–975; these read SSRS…KSNP and PEQL…EFTE. 2 stretches are compositionally biased toward basic and acidic residues: residues 842–880 and 926–935; these read DVEKKEKEEKEAKEKEAKEKEEKEAAKAEEKEPLFERKS and VVKEKPETKQ. The segment covering 944 to 961 has biased composition (low complexity); the sequence is TATATASLPNATTTTSPT.

Belongs to the proteasome subunit S1 family.

In terms of biological role, acts as a regulatory subunit of the 26 proteasome which is involved in the ATP-dependent degradation of ubiquitinated proteins. This is 26S proteasome non-ATPase regulatory subunit 1 (psmD1) from Dictyostelium discoideum (Social amoeba).